A 343-amino-acid chain; its full sequence is Selenide, water dikinase (343 aa).

Residue selenocysteine 16 is part of the active site. Position 16 (selenocysteine 16) is a non-standard amino acid, selenocysteine. Residues lysine 19 and glycine 46–glutamate 48 contribute to the ATP site. Aspartate 49 is a Mg(2+) binding site. ATP is bound by residues aspartate 66, aspartate 89, and glycine 137–threonine 139. Aspartate 89 lines the Mg(2+) pocket. Mg(2+) is bound at residue aspartate 225.

This sequence belongs to the selenophosphate synthase 1 family. Class I subfamily. In terms of assembly, homodimer. Requires Mg(2+) as cofactor.

The enzyme catalyses hydrogenselenide + ATP + H2O = selenophosphate + AMP + phosphate + 2 H(+). Synthesizes selenophosphate from selenide and ATP. The sequence is that of Selenide, water dikinase from Citrifermentans bemidjiense (strain ATCC BAA-1014 / DSM 16622 / JCM 12645 / Bem) (Geobacter bemidjiensis).